A 332-amino-acid chain; its full sequence is Lipoyl synthase (332 aa).

[4Fe-4S] cluster is bound by residues cysteine 74, cysteine 79, cysteine 85, cysteine 100, cysteine 104, cysteine 107, and serine 314. A Radical SAM core domain is found at 85-303 (CFGKGTATFM…EQEAYRMGFS (219 aa)).

It belongs to the radical SAM superfamily. Lipoyl synthase family. [4Fe-4S] cluster is required as a cofactor.

It is found in the cytoplasm. It catalyses the reaction [[Fe-S] cluster scaffold protein carrying a second [4Fe-4S](2+) cluster] + N(6)-octanoyl-L-lysyl-[protein] + 2 oxidized [2Fe-2S]-[ferredoxin] + 2 S-adenosyl-L-methionine + 4 H(+) = [[Fe-S] cluster scaffold protein] + N(6)-[(R)-dihydrolipoyl]-L-lysyl-[protein] + 4 Fe(3+) + 2 hydrogen sulfide + 2 5'-deoxyadenosine + 2 L-methionine + 2 reduced [2Fe-2S]-[ferredoxin]. The protein operates within protein modification; protein lipoylation via endogenous pathway; protein N(6)-(lipoyl)lysine from octanoyl-[acyl-carrier-protein]: step 2/2. Functionally, catalyzes the radical-mediated insertion of two sulfur atoms into the C-6 and C-8 positions of the octanoyl moiety bound to the lipoyl domains of lipoate-dependent enzymes, thereby converting the octanoylated domains into lipoylated derivatives. The protein is Lipoyl synthase of Verminephrobacter eiseniae (strain EF01-2).